The following is a 242-amino-acid chain: Biosynthetic peptidoglycan transglycosylase (242 aa).

Residues 19 to 39 (LMVVLAVFWGGGIALFSVAPV) form a helical membrane-spanning segment.

The protein belongs to the glycosyltransferase 51 family.

The protein resides in the cell inner membrane. The enzyme catalyses [GlcNAc-(1-&gt;4)-Mur2Ac(oyl-L-Ala-gamma-D-Glu-L-Lys-D-Ala-D-Ala)](n)-di-trans,octa-cis-undecaprenyl diphosphate + beta-D-GlcNAc-(1-&gt;4)-Mur2Ac(oyl-L-Ala-gamma-D-Glu-L-Lys-D-Ala-D-Ala)-di-trans,octa-cis-undecaprenyl diphosphate = [GlcNAc-(1-&gt;4)-Mur2Ac(oyl-L-Ala-gamma-D-Glu-L-Lys-D-Ala-D-Ala)](n+1)-di-trans,octa-cis-undecaprenyl diphosphate + di-trans,octa-cis-undecaprenyl diphosphate + H(+). It functions in the pathway cell wall biogenesis; peptidoglycan biosynthesis. Peptidoglycan polymerase that catalyzes glycan chain elongation from lipid-linked precursors. This is Biosynthetic peptidoglycan transglycosylase from Shigella dysenteriae serotype 1 (strain Sd197).